A 382-amino-acid chain; its full sequence is 3-isopropylmalate dehydrogenase (382 aa).

91-102 (GPKWGTGSVRPE) serves as a coordination point for NAD(+). Residues arginine 109, arginine 119, arginine 148, and aspartate 240 each coordinate substrate. Aspartate 240, aspartate 265, and aspartate 269 together coordinate Mg(2+). 304 to 315 (GSAPDLTENKVN) provides a ligand contact to NAD(+).

Belongs to the isocitrate and isopropylmalate dehydrogenases family. In terms of assembly, homodimer. Requires Mg(2+) as cofactor. It depends on Mn(2+) as a cofactor.

Its subcellular location is the cytoplasm. It catalyses the reaction (2R,3S)-3-isopropylmalate + NAD(+) = 4-methyl-2-oxopentanoate + CO2 + NADH. The protein operates within amino-acid biosynthesis; L-leucine biosynthesis; L-leucine from 3-methyl-2-oxobutanoate: step 3/4. In terms of biological role, catalyzes the oxidation of 3-carboxy-2-hydroxy-4-methylpentanoate (3-isopropylmalate) to 3-carboxy-4-methyl-2-oxopentanoate. The product decarboxylates to 4-methyl-2 oxopentanoate. In Debaryomyces hansenii (strain ATCC 36239 / CBS 767 / BCRC 21394 / JCM 1990 / NBRC 0083 / IGC 2968) (Yeast), this protein is 3-isopropylmalate dehydrogenase (LEU2).